Here is a 395-residue protein sequence, read N- to C-terminus: Teichoic acid D-alanyltransferase (395 aa).

The Extracellular segment spans residues 1–6; the sequence is MTPYSS. A helical transmembrane segment spans residues 7 to 26; that stretch reads FLFFILLGILLLPTIILGLN. Residues 27-30 lie on the Cytoplasmic side of the membrane; that stretch reads GKRF. Residues 31–46 form a helical membrane-spanning segment; sequence QAYNMFISIIILALIF. At 47–50 the chain is on the extracellular side; that stretch reads SHDL. The helical transmembrane segment at 51–76 threads the bilayer; that stretch reads HGVIALCLFTIWQVLLISGYLAYRQK. Residues 77-79 are Cytoplasmic-facing; the sequence is ANS. The chain crosses the membrane as a helical span at residues 80–104; sequence GFVFCGAVIASILPLFLSKIWPFLS. At 105 to 120 the chain is on the extracellular side; it reads HPQPHHPPHNLISFLG. Residues 121-137 traverse the membrane as a helical segment; it reads ISYLTFKGVQLIMEARD. Residues 138 to 145 are Cytoplasmic-facing; it reads GLLKEQLP. Residues 146–175 lie within the membrane without spanning it; the sequence is LHRLLYFILFFPTISSGPIDRYRRFVKDEQ. Topologically, residues 176-179 are cytoplasmic; that stretch reads KAWT. The chain crosses the membrane as a helical span at residues 180–223; the sequence is KEEYADLLYTGIHKIFIGFLYKFIIGYAINTYFIMNLPAITHNK. I224 is a topological domain (extracellular). A helical transmembrane segment spans residues 225 to 256; it reads LGNLLYMYGYSMYLFFDFAGYTMFAVGVSYIM. Residues 257–266 lie on the Cytoplasmic side of the membrane; the sequence is GIKSPENFNK. Residues 267–303 lie within the membrane without spanning it; it reads PFISKNIKDFWNRWHMSLSFWFRDYVFMRFVFWMTKK. The Cytoplasmic segment spans residues 304-308; the sequence is KWIKN. Residues 309–328 form a helical membrane-spanning segment; the sequence is RMAVSNIGYFLLFMLMGVWH. The active site involves H328. Residues 329–333 lie on the Extracellular side of the membrane; that stretch reads GLAPQ. Residues 334–351 traverse the membrane as a helical segment; it reads YIIYGLYHAVLMTCYNFF. Topologically, residues 352-364 are cytoplasmic; it reads EKWNKKYKWLPSN. Residues 365-387 form a helical membrane-spanning segment; it reads RWTTILAIVITFHFVCFGFYIFS. The Extracellular portion of the chain corresponds to 388-395; that stretch reads GKPFHHHH.

Belongs to the membrane-bound acyltransferase family.

It is found in the cell membrane. The protein operates within cell wall biogenesis; lipoteichoic acid biosynthesis. O-acyltransferase that catalyzes D-alanylation of both teichoic acid and lipoteichoic acid (LTA). D-alanylation of LTA plays an important role in modulating the properties of the cell wall in Gram-positive bacteria, influencing the net charge of the cell wall. Catalyzes D-alanylation from DltC carrier protein. The polypeptide is Teichoic acid D-alanyltransferase (Bacillus subtilis (strain 168)).